A 684-amino-acid chain; its full sequence is Probable potassium transport system protein Kup (684 aa).

12 helical membrane-spanning segments follow: residues 19–39, 61–81, 104–124, 151–171, 177–197, 223–243, 255–275, 303–323, 352–372, 381–401, 407–427, and 433–453; these read ALLV…LYVM, VSLI…LIAL, WLVL…MLTP, QVIW…RFGT, AFGP…FIAL, MGLF…ALYS, LSWP…AVWL, LGAI…LISG, LYIP…IGYF, AYGL…YQYL, PAVV…VFFI, and FLHG…VMYV.

Belongs to the HAK/KUP transporter (TC 2.A.72) family.

The protein localises to the cell membrane. It carries out the reaction K(+)(in) + H(+)(in) = K(+)(out) + H(+)(out). Its function is as follows. Transport of potassium into the cell. Likely operates as a K(+):H(+) symporter. The chain is Probable potassium transport system protein Kup from Lacticaseibacillus paracasei (strain ATCC 334 / BCRC 17002 / CCUG 31169 / CIP 107868 / KCTC 3260 / NRRL B-441) (Lactobacillus paracasei).